The chain runs to 344 residues: Methionine import ATP-binding protein MetN (344 aa).

The 240-residue stretch at 2–241 (IELQGLSQRF…PQHEVTRAMI (240 aa)) folds into the ABC transporter domain. 38 to 45 (GRSGAGKS) serves as a coordination point for ATP.

The protein belongs to the ABC transporter superfamily. Methionine importer (TC 3.A.1.24) family. The complex is composed of two ATP-binding proteins (MetN), two transmembrane proteins (MetI) and a solute-binding protein (MetQ).

It localises to the cell inner membrane. It catalyses the reaction L-methionine(out) + ATP + H2O = L-methionine(in) + ADP + phosphate + H(+). It carries out the reaction D-methionine(out) + ATP + H2O = D-methionine(in) + ADP + phosphate + H(+). Its function is as follows. Part of the ABC transporter complex MetNIQ involved in methionine import. Responsible for energy coupling to the transport system. This chain is Methionine import ATP-binding protein MetN, found in Cupriavidus pinatubonensis (strain JMP 134 / LMG 1197) (Cupriavidus necator (strain JMP 134)).